The chain runs to 281 residues: Undecaprenyl-diphosphatase (281 aa).

The next 8 helical transmembrane spans lie at 1 to 21, 45 to 65, 93 to 113, 125 to 145, 155 to 175, 195 to 215, 227 to 247, and 256 to 276; these read MNVL…FLPI, WTAF…IYFA, SKLG…GLVF, LIVI…SEVV, ISWL…VPGA, AARF…LLEF, FLVL…TIAF, and STNV…WMVF.

Belongs to the UppP family.

It localises to the cell inner membrane. It carries out the reaction di-trans,octa-cis-undecaprenyl diphosphate + H2O = di-trans,octa-cis-undecaprenyl phosphate + phosphate + H(+). In terms of biological role, catalyzes the dephosphorylation of undecaprenyl diphosphate (UPP). Confers resistance to bacitracin. This is Undecaprenyl-diphosphatase from Syntrophobacter fumaroxidans (strain DSM 10017 / MPOB).